A 147-amino-acid polypeptide reads, in one-letter code: Hemoglobin subunit beta (147 aa).

The region spanning 3 to 147 (HWTAEEKQLI…VAHALARKYH (145 aa)) is the Globin domain. H64 and H93 together coordinate heme b.

It belongs to the globin family. Heterotetramer of two alpha chains and two beta chains. As to expression, red blood cells.

Its function is as follows. Involved in oxygen transport from the lung to the various peripheral tissues. This is Hemoglobin subunit beta (HBB) from Cairina moschata (Muscovy duck).